Consider the following 202-residue polypeptide: ATP-dependent Clp protease proteolytic subunit (202 aa).

Residue S98 is the Nucleophile of the active site. H123 is an active-site residue.

It belongs to the peptidase S14 family. As to quaternary structure, fourteen ClpP subunits assemble into 2 heptameric rings which stack back to back to give a disk-like structure with a central cavity, resembling the structure of eukaryotic proteasomes.

It localises to the cytoplasm. The catalysed reaction is Hydrolysis of proteins to small peptides in the presence of ATP and magnesium. alpha-casein is the usual test substrate. In the absence of ATP, only oligopeptides shorter than five residues are hydrolyzed (such as succinyl-Leu-Tyr-|-NHMec, and Leu-Tyr-Leu-|-Tyr-Trp, in which cleavage of the -Tyr-|-Leu- and -Tyr-|-Trp bonds also occurs).. Its function is as follows. Cleaves peptides in various proteins in a process that requires ATP hydrolysis. Has a chymotrypsin-like activity. Plays a major role in the degradation of misfolded proteins. This chain is ATP-dependent Clp protease proteolytic subunit, found in Solidesulfovibrio magneticus (strain ATCC 700980 / DSM 13731 / RS-1) (Desulfovibrio magneticus).